We begin with the raw amino-acid sequence, 473 residues long: Photosystem II CP43 reaction center protein (473 aa).

Residues 1-14 constitute a propeptide that is removed on maturation; the sequence is MKNLYSLRRFYHVE. T15 carries the N-acetylthreonine modification. T15 carries the phosphothreonine modification. Transmembrane regions (helical) follow at residues 69–93, 134–155, 178–200, 255–275, and 291–312; these read LFEV…PHLA, LVGP…KDKN, KAMY…RIIS, KPWA…LSYS, and WFNT…ASQS. E367 lines the [CaMn4O5] cluster pocket. Residues 447–471 traverse the membrane as a helical segment; that stretch reads RARAAAAGFEKGIDRDNEPVLSMRP.

The protein belongs to the PsbB/PsbC family. PsbC subfamily. In terms of assembly, PSII is composed of 1 copy each of membrane proteins PsbA, PsbB, PsbC, PsbD, PsbE, PsbF, PsbH, PsbI, PsbJ, PsbK, PsbL, PsbM, PsbT, PsbX, PsbY, PsbZ, Psb30/Ycf12, at least 3 peripheral proteins of the oxygen-evolving complex and a large number of cofactors. It forms dimeric complexes. Binds multiple chlorophylls and provides some of the ligands for the Ca-4Mn-5O cluster of the oxygen-evolving complex. It may also provide a ligand for a Cl- that is required for oxygen evolution. PSII binds additional chlorophylls, carotenoids and specific lipids. is required as a cofactor.

The protein localises to the plastid. It localises to the chloroplast thylakoid membrane. Its function is as follows. One of the components of the core complex of photosystem II (PSII). It binds chlorophyll and helps catalyze the primary light-induced photochemical processes of PSII. PSII is a light-driven water:plastoquinone oxidoreductase, using light energy to abstract electrons from H(2)O, generating O(2) and a proton gradient subsequently used for ATP formation. The sequence is that of Photosystem II CP43 reaction center protein from Chlorella vulgaris (Green alga).